We begin with the raw amino-acid sequence, 73 residues long: Large ribosomal subunit protein bL28 (73 aa).

The protein belongs to the bacterial ribosomal protein bL28 family.

The protein is Large ribosomal subunit protein bL28 of Anaeromyxobacter dehalogenans (strain 2CP-1 / ATCC BAA-258).